The chain runs to 229 residues: Transmembrane protein 182 (229 aa).

Positions 1 to 26 (MRLNVAVFFGALFGALGVLLFLVAFG) are cleaved as a signal peptide. The Extracellular segment spans residues 27–114 (SDYWLLATEV…SYDSAIIYRG (88 aa)). Asn47 is a glycosylation site (N-linked (GlcNAc...) asparagine). Positions 49–59 (TFHHEGFFWRC) are interaction with ITGB1. N-linked (GlcNAc...) asparagine glycosylation is found at Asn68, Asn85, and Asn102. The helical transmembrane segment at 115–135 (FWAVLLLLGVVAALTASFLII) threads the bilayer. Topologically, residues 136-153 (CAAPFSSHFLYKAGGGSY) are cytoplasmic. A helical transmembrane segment spans residues 154-174 (IASGVLFSLVVILYVIWVQAV). Residues 175-200 (ADMESYRALRMRDCWEFTPSILYGWS) are Extracellular-facing. A helical transmembrane segment spans residues 201–221 (FFLAPAGVFFSLLAGLLFLVV). The Cytoplasmic segment spans residues 222–229 (GRHIQIHH).

This sequence belongs to the TMEM182 family. In terms of assembly, interacts with ITGB1. Highly expressed in white adipose tissues (WAT), with 10-fold to 20-fold higher levels than in brown adipose tissue (BAT). Also expressed in skeletal muscle, heart and lung. Lower relative levels of expression in kidney, spleen, testis, brain and liver.

Its subcellular location is the cell membrane. In terms of biological role, negatively regulates myogenesis and skeletal muscle regeneration via its association with ITGB1. Modulates ITGB1 activation by decreasing ITGB1-LAMB1 interaction and inhibiting ITGB1-mediated intracellular signaling during myogenesis. The protein is Transmembrane protein 182 (Tmem182) of Mus musculus (Mouse).